We begin with the raw amino-acid sequence, 628 residues long: Kinesin-like protein subito (628 aa).

The segment at 28–68 is disordered; it reads RFRPRPNKKMRLFDNIQESEEESFSEYSDTESEYKYQSSEA. Residues 44-58 show a composition bias toward acidic residues; that stretch reads QESEEESFSEYSDTE. A Kinesin motor domain is found at 87 to 479; sequence GPQVFLRLRP…LNFASIAKNI (393 aa). 169 to 176 provides a ligand contact to ATP; sequence GTSGSGKT. A coiled-coil region spans residues 509 to 612; that stretch reads DYTKELEDEN…KNPASDTDIS (104 aa). The interval 596–628 is disordered; sequence KDEIEELKNPASDTDISDDPNESKSPIEILDDD. A Phosphoserine modification is found at Ser607. Phosphothreonine is present on Thr609. Phosphoserine is present on Ser612.

This sequence belongs to the TRAFAC class myosin-kinesin ATPase superfamily. Kinesin family.

It localises to the cytoplasm. Its subcellular location is the cytoskeleton. In terms of biological role, required during female meiosis for bipolar spindle formation in the absence of the centrosomes and chromosome homolog segregation. Also has roles in male meiosis and mitotic divisions of the early embryo. This Drosophila melanogaster (Fruit fly) protein is Kinesin-like protein subito (sub).